The sequence spans 270 residues: S-methyl-5'-thioadenosine phosphorylase (270 aa).

Phosphate-binding positions include serine 16, 58 to 59 (RH), and 91 to 92 (SA). Intrachain disulfides connect cysteine 138-cysteine 205, cysteine 200-cysteine 262, and cysteine 259-cysteine 261. Methionine 190 provides a ligand contact to substrate. Threonine 191 contacts phosphate. 214 to 216 (DYD) contacts substrate.

This sequence belongs to the PNP/MTAP phosphorylase family. MTAP subfamily. As to quaternary structure, homohexamer. Dimer of a homotrimer.

It carries out the reaction S-methyl-5'-thioadenosine + phosphate = 5-(methylsulfanyl)-alpha-D-ribose 1-phosphate + adenine. The protein operates within amino-acid biosynthesis; L-methionine biosynthesis via salvage pathway; S-methyl-5-thio-alpha-D-ribose 1-phosphate from S-methyl-5'-thioadenosine (phosphorylase route): step 1/1. Functionally, catalyzes the reversible phosphorylation of S-methyl-5'-thioadenosine (MTA) to adenine and 5-methylthioribose-1-phosphate. Involved in the breakdown of MTA, a major by-product of polyamine biosynthesis. Responsible for the first step in the methionine salvage pathway after MTA has been generated from S-adenosylmethionine. Has broad substrate specificity with 6-aminopurine nucleosides as preferred substrates. This is S-methyl-5'-thioadenosine phosphorylase from Saccharolobus solfataricus (strain ATCC 35092 / DSM 1617 / JCM 11322 / P2) (Sulfolobus solfataricus).